Reading from the N-terminus, the 344-residue chain is F17d-G fimbrial adhesin (344 aa).

A signal peptide spans 1–22 (MTNFYKVFLAVFILVCCNISQA). A receptor-binding lectin domain region spans residues 23 to 199 (AVSFIGSTEN…SLNPFTLNDT (177 aa)). A carbohydrate contacts are provided by residues 65-66 (AN), 110-111 (DT), and 139-142 (STQG). A disulfide bridge connects residues Cys75 and Cys132. The tract at residues 200–344 (VTSCRLLTPS…GISTFTFSYQ (145 aa)) is fimbrillin-binding domain. The interval 288–308 (LKFGPDSPVKGNENQWQLSTG) is disordered. Polar residues predominate over residues 299 to 308 (NENQWQLSTG).

This sequence belongs to the fimbrial protein family.

The protein resides in the fimbrium. In terms of biological role, essential fimbrial adhesion factor that mediates binding to N-acetylglucosamine-containing receptors in the host intestinal microvilli, leading to colonization of the intestinal tissue, and diarrhea or septicemia. Also confers adhesiveness to laminin and basement membranes. This chain is F17d-G fimbrial adhesin (f17dG), found in Escherichia coli.